We begin with the raw amino-acid sequence, 276 residues long: MDYRACTSALRMPVLLLLLCTFSCNLAEQEVENLSGLSSNPDKNIFAIRENGTTCLMAEFSARILVPYEVPSSNEVDWDLEEASIQLPRDTEIRGKCWNNESELHLSWLDKAYTLKLFFSKEGQDASKSRSWKMSKIQFLYDPSEHTIFKSGARPGRHTANSHHLSLMVTPAGMSYECEATQRISLTSTDHQKIVVLYLSEVHLQPFDIKSDFVYSEEYKCPTDQRKQLEETLPLILGLTLGVAILIIVAVYHIHHKMTANQVQIPRDRSLYKHMG.

A signal peptide spans 1 to 27; sequence MDYRACTSALRMPVLLLLLCTFSCNLA. Residues 28–231 lie on the Extracellular side of the membrane; the sequence is EQEVENLSGL…PTDQRKQLEE (204 aa). N33, N51, and N100 each carry an N-linked (GlcNAc...) asparagine glycan. The helical transmembrane segment at 232-252 threads the bilayer; the sequence is TLPLILGLTLGVAILIIVAVY. The Cytoplasmic segment spans residues 253–276; sequence HIHHKMTANQVQIPRDRSLYKHMG.

The protein belongs to the LAMP family. Glycosylated.

The protein localises to the cytoplasmic vesicle membrane. The protein resides in the cell membrane. It is found in the cell projection. Its subcellular location is the dendrite. It localises to the cytoplasmic vesicle. The protein localises to the secretory vesicle. The protein resides in the synaptic vesicle membrane. It is found in the growth cone membrane. Its subcellular location is the early endosome membrane. It localises to the recycling endosome. The protein localises to the endoplasmic reticulum-Golgi intermediate compartment membrane. The protein resides in the endosome membrane. Plays a role in short-term synaptic plasticity in a subset of GABAergic neurons in the brain. The sequence is that of Lysosome-associated membrane glycoprotein 5 (lamp5) from Xenopus tropicalis (Western clawed frog).